The chain runs to 55 residues: GRPSARYDAPYCSQEEVRECDDDCSGNPVRDACQCAYDPAGSPACDCFCVEPWRR.

The propeptide occupies 1–5; it reads GRPSA.

Contains 4 disulfide bonds. In terms of tissue distribution, expressed by the venom duct.

It localises to the secreted. Probable neurotoxin with unknown target. Possibly targets ion channels. In Californiconus californicus (California cone), this protein is Conotoxin Cal22c.